A 57-amino-acid chain; its full sequence is Thiocillin GE37468 (57 aa).

A propeptide spans 1-42 (MGNNEEYFIDVNDLSIDVFDVVEQGGAVTALTADHGMPEVGA) (removed in mature form). The segment at residues 43 to 44 (ST) is a cross-link (5-methyloxazole-4-carboxylic acid (Ser-Thr)). The segment at residues 43–52 (STNCFCYICC) is a cross-link (pyridine-2,5-dicarboxylic acid (Ser-Cys) (with S-53)). The pyridine-2,5-dicarboxylic acid (Ser-Ser) (with C-52) cross-link spans 43 to 53 (STNCFCYICCS). A cross-link (thiazole-4-carboxylic acid (Asn-Cys)) is located at residues 45 to 46 (NC). Residues 47–48 (FC) constitute a cross-link (thiazoline-4-carboxylic acid (Phe-Cys)). Ile-50 carries the 5-hydroxy-3-methylproline (Ile) modification. The segment at residues 50-51 (IC) is a cross-link (thiazole-4-carboxylic acid (Ile-Cys)). Positions 51 to 52 (CC) form a cross-link, thiazole-4-carboxylic acid (Cys-Cys). A cross-link (thiazole-4-carboxylic acid (Ser-Cys)) is located at residues 53-54 (SC). A 2,3-didehydroalanine (Ser) mark is found at Ser-55 and Ser-56. Position 57 (Asn-57) is a propeptide, removed in mature form.

Post-translationally, maturation of thiazole and oxazole containing antibiotics involves the enzymatic condensation of a Cys, Ser or Thr with the alpha-carbonyl of the preceding amino acid to form a thioether or ether bond, then dehydration to form a double bond with the alpha-amino nitrogen. Thiazoline or oxazoline ring are dehydrogenated to form thiazole or oxazole rings. Maturation of pyridinyl containing antibiotics involves the cross-linking of a Ser and a Cys-Ser pair usually separated by 7 or 8 residues along the peptide chain. The Ser residues are dehydrated to didehydroalanines, then bonded between their beta carbons. The alpha carbonyl of the Cys condenses with alpha carbon of the first Ser to form a pyridinyl ring. The ring may be multiply dehydrogenated to form a pyridine ring with loss of the amino nitrogen of the first Ser.

The protein localises to the secreted. In terms of biological role, has bacteriocidal activity against both aerobic and anaerobic Gram-positive bacteria. Inhibits growth of B.subtilis (MIC=0.047 ug/ml) and methicillin-resistant S.aureus (MRSA) (MIC=0.047 ug/ml). Has poor activity against Gram-negative bacteria, with the exception of B.fragilis. Inhibits bacterial protein biosynthesis by acting on elongation factor Tu (EF-Tu). Full antibiotic activity depends on the presence of the modified residue Ile-50. The sequence is that of Thiocillin GE37468 (getA) from Streptomyces sp.